A 77-amino-acid polypeptide reads, in one-letter code: UPF0291 protein EAT1b_0405 (77 aa).

The disordered stretch occupies residues 53 to 77; that stretch reads KVVDPDGNDVTPEKLKEDQKRYRGE. Residues 63–77 are compositionally biased toward basic and acidic residues; the sequence is TPEKLKEDQKRYRGE.

This sequence belongs to the UPF0291 family.

It is found in the cytoplasm. This is UPF0291 protein EAT1b_0405 from Exiguobacterium sp. (strain ATCC BAA-1283 / AT1b).